A 214-amino-acid polypeptide reads, in one-letter code: Pyridoxine/pyridoxamine 5'-phosphate oxidase (214 aa).

Residues 10–13 (RLNY) and Lys68 each bind substrate. Residues 63-68 (RMVLLK), 78-79 (YT), Lys85, and Gln107 contribute to the FMN site. Substrate-binding residues include Tyr125, Arg129, and Ser133. FMN is bound by residues 142–143 (QS) and Trp187. Residue 193–195 (RLH) participates in substrate binding. Arg197 provides a ligand contact to FMN.

Belongs to the pyridoxamine 5'-phosphate oxidase family. In terms of assembly, homodimer. It depends on FMN as a cofactor.

It carries out the reaction pyridoxamine 5'-phosphate + O2 + H2O = pyridoxal 5'-phosphate + H2O2 + NH4(+). The enzyme catalyses pyridoxine 5'-phosphate + O2 = pyridoxal 5'-phosphate + H2O2. The protein operates within cofactor metabolism; pyridoxal 5'-phosphate salvage; pyridoxal 5'-phosphate from pyridoxamine 5'-phosphate: step 1/1. It functions in the pathway cofactor metabolism; pyridoxal 5'-phosphate salvage; pyridoxal 5'-phosphate from pyridoxine 5'-phosphate: step 1/1. In terms of biological role, catalyzes the oxidation of either pyridoxine 5'-phosphate (PNP) or pyridoxamine 5'-phosphate (PMP) into pyridoxal 5'-phosphate (PLP). In Synechocystis sp. (strain ATCC 27184 / PCC 6803 / Kazusa), this protein is Pyridoxine/pyridoxamine 5'-phosphate oxidase.